The following is a 316-amino-acid chain: Methionyl-tRNA formyltransferase (316 aa).

A (6S)-5,6,7,8-tetrahydrofolate-binding site is contributed by 111-114 (GLLP).

This sequence belongs to the Fmt family.

The enzyme catalyses L-methionyl-tRNA(fMet) + (6R)-10-formyltetrahydrofolate = N-formyl-L-methionyl-tRNA(fMet) + (6S)-5,6,7,8-tetrahydrofolate + H(+). In terms of biological role, attaches a formyl group to the free amino group of methionyl-tRNA(fMet). The formyl group appears to play a dual role in the initiator identity of N-formylmethionyl-tRNA by promoting its recognition by IF2 and preventing the misappropriation of this tRNA by the elongation apparatus. This chain is Methionyl-tRNA formyltransferase, found in Chlamydia trachomatis serovar L2b (strain UCH-1/proctitis).